A 192-amino-acid polypeptide reads, in one-letter code: tRNA (cytidine(56)-2'-O)-methyltransferase (192 aa).

Residues leucine 84 and 112–116 (GGEKV) contribute to the S-adenosyl-L-methionine site.

Belongs to the aTrm56 family. Homodimer.

The protein resides in the cytoplasm. The catalysed reaction is cytidine(56) in tRNA + S-adenosyl-L-methionine = 2'-O-methylcytidine(56) in tRNA + S-adenosyl-L-homocysteine + H(+). Specifically catalyzes the AdoMet-dependent 2'-O-ribose methylation of cytidine at position 56 in tRNAs. This is tRNA (cytidine(56)-2'-O)-methyltransferase from Halobacterium salinarum (strain ATCC 700922 / JCM 11081 / NRC-1) (Halobacterium halobium).